The chain runs to 2104 residues: Myosin type-2 heavy chain 2 (2104 aa).

Positions 35-85 (DERTWIWIPDSKESFVKAWIVEDLGEKYRVKLERDGSERIVDGFDAEKVNP) constitute a Myosin N-terminal SH3-like domain. The Myosin motor domain occupies 89 to 767 (DMVDDMAALT…VLGSLEDRRN (679 aa)). Residue 182 to 189 (GESGAGKT) coordinates ATP. The tract at residues 646-660 (LSSLMHQLEATQPHF) is actin-binding. Positions 829–2104 (LGTTQTDEYL…RSNRSPSVLR (1276 aa)) form a coiled coil. 2 disordered regions span residues 1245-1278 (NRSV…DGNN) and 1398-1426 (MEFT…SKRS). Residues 1246-1259 (RSVTQHTLDGNSPH) are compositionally biased toward polar residues. Residues 1261 to 1278 (SFEEKHSGDPLKRIDGNN) show a composition bias toward basic and acidic residues. Positions 1409 to 1424 (SKISNLPSSQPGSPSK) are enriched in polar residues. At S1421 the chain carries Phosphoserine.

The protein belongs to the TRAFAC class myosin-kinesin ATPase superfamily. Myosin family. Binds to cdc4 and rlc1.

In terms of biological role, stabilizes the F-actin cables forming the F-actin ring that surrounds the nucleus during interphase. May work in conjunction with myo2. The protein is Myosin type-2 heavy chain 2 (myo3) of Schizosaccharomyces pombe (strain 972 / ATCC 24843) (Fission yeast).